The primary structure comprises 316 residues: GTPase Era (316 aa).

Residues 9 to 190 form the Era-type G domain; that stretch reads RAGFAAIIGA…TAKLVSMMPE (182 aa). The segment at 17 to 24 is G1; that stretch reads GAPNAGKS. 17–24 is a GTP binding site; sequence GAPNAGKS. Positions 43-47 are G2; that stretch reads QTTRF. Residues 64–67 are G3; it reads DTPG. GTP is bound by residues 64–68 and 140–143; these read DTPGI and NKID. The segment at 140–143 is G4; that stretch reads NKID. Residues 169 to 171 form a G5 region; that stretch reads ISA. Residues 221-298 enclose the KH type-2 domain; that stretch reads VHEELPYAAT…HLFLHVKVKE (78 aa).

This sequence belongs to the TRAFAC class TrmE-Era-EngA-EngB-Septin-like GTPase superfamily. Era GTPase family. As to quaternary structure, monomer.

The protein localises to the cytoplasm. It is found in the cell inner membrane. Functionally, an essential GTPase that binds both GDP and GTP, with rapid nucleotide exchange. Plays a role in 16S rRNA processing and 30S ribosomal subunit biogenesis and possibly also in cell cycle regulation and energy metabolism. The chain is GTPase Era from Caulobacter vibrioides (strain ATCC 19089 / CIP 103742 / CB 15) (Caulobacter crescentus).